An 85-amino-acid chain; its full sequence is ATP synthase subunit c (85 aa).

The next 2 membrane-spanning stretches (helical) occupy residues 10 to 30 and 53 to 73; these read IAVALLIGLGALGTAIGFGLL and FIVAGLLDAVTMIGVGIALFF.

The protein belongs to the ATPase C chain family. As to quaternary structure, F-type ATPases have 2 components, F(1) - the catalytic core - and F(0) - the membrane proton channel. F(1) has five subunits: alpha(3), beta(3), gamma(1), delta(1), epsilon(1). F(0) has three main subunits: a(1), b(2) and c(10-14). The alpha and beta chains form an alternating ring which encloses part of the gamma chain. F(1) is attached to F(0) by a central stalk formed by the gamma and epsilon chains, while a peripheral stalk is formed by the delta and b chains.

It localises to the cell inner membrane. Its function is as follows. F(1)F(0) ATP synthase produces ATP from ADP in the presence of a proton or sodium gradient. F-type ATPases consist of two structural domains, F(1) containing the extramembraneous catalytic core and F(0) containing the membrane proton channel, linked together by a central stalk and a peripheral stalk. During catalysis, ATP synthesis in the catalytic domain of F(1) is coupled via a rotary mechanism of the central stalk subunits to proton translocation. Key component of the F(0) channel; it plays a direct role in translocation across the membrane. A homomeric c-ring of between 10-14 subunits forms the central stalk rotor element with the F(1) delta and epsilon subunits. In Pseudomonas syringae pv. syringae (strain B728a), this protein is ATP synthase subunit c.